Reading from the N-terminus, the 2381-residue chain is MDALHLACHLPGGITSPSGLWDYVYNKKSAQCTVPLDRYNIEGFYHKDGSRAGVMSVDGGYFIQEDVRKFDPSFFGINNLEASYMDPQQRKLLEVVYECFENAGLSMEDVSGSNTAVFVGNFTVDYSVMQSRDTDYVHRLAATGGGTSIMSNRISHVFNLHGPSFTLDTACSSTIYALHQAVNAIKNGDCDAAIVAGANLITSPEQHFGTAKGGFLSPTSACHTFDTSADGYARAEALNAIYITRLSSAMKSDRKIHAVIRGTAINANGKTPGITLPDAKMQAAVIRKAYQNAGLSFADTDYVECHGTGTPVGDPIEVDGIAACFAGREGEPLRIGSVKTNMGHSEAASGLTSIIKVALAFEHGMIPPTYGVKNLNPKLKLKERNMKVLTEVEAWPRALRRAGVNSFGYGGANGHVILESIDSYFVGSLVSSPITRALSNPYESEKDYVVVIPFSASSGKSLEARRKQAIETVEKTEASALKPLAAAMSKRQTKMRLRDYVLASASSNSQPSLIDMTDVGDKASPGTQPLPFAFVFTGQGAQYANMAKELVEQDFGFLTSIRDLDEVLQSLPAEYKPSWTLEQTILDKPATSKINDVTRSQPICTAVQVSLVNMLQSWGVSPSAVIGHSSGEIAAAYGSGLLTASEAILAAYFRGFAVGQLQSRGAMMAVGITPDGAIALIEQLGLKEVRVACVNAPESVTLSGAVKDIDSLQAKLQKEKKFARKLETGGRAYHSHMMAEIGDLYESLVTPYITVKKVAEMEVKMFSTVGHSIDALGTVDLSTEMASYFRKNLEQPVQFSAGLANMITSNKYHLIEIGPHSALKGPIQQIRTSAKRDKEGVPYSPTLVRKENSYVCLKKLAGTLFSYGHSLDWYAVNNVPRYHALPTPPLASYPWDYSKPLPWHEPRASVEHRLRKHVRHELLGTRATAGNGIEWCWRNIPRMSEMPWLRDHKLGESQVVLPGAAYMAMAIEAFSQVHEIKGKLIAGEPFSFEFENVNISAAFVVPDENDAEADKTELHTLMSPRKISTANISGNWHEFSISSWVSGIATLHCMGSIRVMESTLKPKDGSVMISGNGHEVWGMSRWYAKAKEEGLNFGPTFQSLTSLHTDGNRTSTDSIATTLLDPPSAAATGMFYAVHPITIDACFQATIMGGTAGNINTLRAYVPVFVSSCSIQIPRGGSASLGEEEVRIHSRMEKTGFSTRAVSFTLRLPDGTPVIDMPHLRMNEYTGKAPVEPETSIYLQRQPCLRVQWKPDVLRLRPGSDGAIREYIASFAAQQSDDLKDNGALVVFAALLDLFGHKVPRMSVLELGQESQWTPKDCQSILGKGTAFPRFRLWNDGKLGDNSKIIVDNAKNSDSYDVVLIPHLSVSNKIWAEAADAIISLISDDGIIITRRSKDVVSALKTSGFVVLELPNETLVAVRSPKQTGLENKEVVIVKPNEASPSINSLATAVATHLKNAGVVQLRTVTIDSIETVNLNSQVVCVSLLEMEHEFLATINSEDMDRFRKITDNVGDLLWLTGANMLSTPNPDLTLSSGLSRALMLEQPALRYAILDVGADISKPNSMELICNSVSASLVFRHATDDKEFIQKDGIVYISRFVPDVELNALFRHRMTPDSMKLVPLREVGPAKLSIGQVGMTDTIHFQQISERKTTPPAGFVDVDLRAIGLNAKDVYALNGRAETRSATTALDFGGVISAVGPGIEHLKVGDRVAGFIPNHFGTTERVTVQAVHKMLPEEEFTVLPTLLTVYCTALVALRDRAHLRAGESILIHSGAGAFGLAAITMAKYMGATVFATVGSHSKREYLIKEMGVPTENIFNSRSASFMEDILAATGGRGVNVIVNSLVGDLMHASWSCIAPFGRFVEIGKRELIDAGKLDMRVFLKNATFTAFDLSEFFYAEDSYYQDIVYGYTAEVIEMYRAGIIKASPIATFDVAEIGQAYRYFGNKDRVGKVVVSMENSRSLIQVVPASYQSVFHPEKTYLLVGCLGGLGRSLSRWMMSRGARKFCFLGRSGCDKPSAAELVNRLRDAGASVTVVRGDVSNEDQVREAVAACSKKGPIGGVVQAAMGLSEALFSVMTNKAWHTGIQPKWKGSWNLHHALEGHDADLDFFLLTSSISGSCGTATESNYCSANGFLDSFARWRRSQGKPAVSVGLGMISEVGYLHENPDIEAMLLRKGIQPLNEDEFLQVLDYGISGPGSDSEFGRGVSMTSESAHILTGLESYGVRKLMAQGFEVNNGVMDESRTSILAASLLSEKDAKEEEKGADVGQLLAAAEWVKDVPANALSMLIPEASAPTMLDAILRLTKKRFSNLILMQLDAVDDSAPLPSFGVDSMLAAEFRTWFFNTFKIDVPFLDIVSPQKSLHTLAEFIEEKLVASWAS.

A Ketosynthase family 3 (KS3) domain is found at 1–420 (MDALHLACHL…GANGHVILES (420 aa)). Active-site for beta-ketoacyl synthase activity residues include cysteine 171, histidine 306, and histidine 344. The interval 535–851 (VFTGQGAQYA…PYSPTLVRKE (317 aa)) is malonyl-CoA:ACP transacylase (MAT) domain. Serine 629 serves as the catalytic For malonyltransferase activity. The tract at residues 920–1064 (HELLGTRATA…GSIRVMESTL (145 aa)) is N-terminal hotdog fold. The dehydratase (DH) domain stretch occupies residues 920–1232 (HELLGTRATA…HLRMNEYTGK (313 aa)). A PKS/mFAS DH domain is found at 920–1235 (HELLGTRATA…MNEYTGKAPV (316 aa)). Residue histidine 952 is the Proton acceptor; for dehydratase activity of the active site. Residues 1078–1235 (HEVWGMSRWY…MNEYTGKAPV (158 aa)) are C-terminal hotdog fold. Catalysis depends on aspartate 1144, which acts as the Proton donor; for dehydratase activity. The interval 1639-1956 (GMTDTIHFQQ…NKDRVGKVVV (318 aa)) is enoyl reductase (ER) domain. Positions 1981–2159 (TYLLVGCLGG…AVSVGLGMIS (179 aa)) are ketoreductase (KR) domain. Positions 2297–2375 (TMLDAILRLT…TLAEFIEEKL (79 aa)) constitute a Carrier domain. Serine 2334 bears the O-(pantetheine 4'-phosphoryl)serine mark.

Its pathway is secondary metabolite biosynthesis. Highly reducing polyketide synthase; part of the gene cluster that mediates the biosynthesis of virensols and trichoxide, fungal natural products that contain or are derived from a salicylaldehyde core. The pathway begins with the synthesis of the reduced chain in virensol C by the highly reducing polyketide synthase virA via condensation of one acetate and 8 malonate units. VirA has interesting programming rules since the first 2 ketides are fully reduced, the 3 following ketides undergo beta-dehydration, and the last 3 ketides are only reduced to beta-hydroxys to yield the trihydroxy portion. The production of aldehyde virensol C by virA alone is surprising, since virA does not contain a reductase (R) domain that is typically associated with reductive product release in HRPKS. The cupin-domain enzyme virC is involved in enhancing virA product turnover. The short-chain dehydrogenase virB then oxidizes the C-7 alcohol of virensol C to a ketone, yielding virensol D. Virensol D is further transformed to salicylaldehyde 5-deoxyaurocitrin by the short-chain dehydrogenase virD. VirD catalyzes the dehydrogenation of C-3 to form the beta-ketone aldehyde, which is followed by the generation of the nucleophilic C-2 that is required for the intramolecular aldol condensation between C-2 and C-7, itself followed by dehydration and aromatization which leads to salicylaldehyde 5-deoxyaurocitrin. While the dehydrogenation of virensol D is definitely catalyzed by virD, the aldol condensation and dehydration may be uncatalyzed or assisted by virD. The short chain dehydrogenase virG then converts salicylaldehyde 5-deoxyaurocitrin into virensol B which is further hydroxylated by the cytochrome P450 monooxygenase virE to yield the hydroquinone virensol A. VirI then may oxidize virensol A to form the quinone, while virH performs the epoxidation. Finally, the two remaining short-chain dehydrogenases, virK and virL, are probably responsible for reducing the ketones to the corresponding alcohols to furnish the epoxycyclohexanol structure in trichoxide. This chain is Highly reducing polyketide synthase virA, found in Hypocrea virens (strain Gv29-8 / FGSC 10586) (Gliocladium virens).